The sequence spans 514 residues: Peptide chain release factor 3 (514 aa).

The tr-type G domain occupies 8–268; that stretch reads KKRRTFAIIS…TFLEFAPEPH (261 aa). Residues 17–24, 85–89, and 139–142 each bind GTP; these read SHPDAGKT, DTPGH, and NKLD.

The protein belongs to the TRAFAC class translation factor GTPase superfamily. Classic translation factor GTPase family. PrfC subfamily.

Its subcellular location is the cytoplasm. Functionally, increases the formation of ribosomal termination complexes and stimulates activities of RF-1 and RF-2. It binds guanine nucleotides and has strong preference for UGA stop codons. It may interact directly with the ribosome. The stimulation of RF-1 and RF-2 is significantly reduced by GTP and GDP, but not by GMP. This Streptococcus pyogenes serotype M18 (strain MGAS8232) protein is Peptide chain release factor 3.